The sequence spans 259 residues: PF03932 family protein CutC (259 aa).

This sequence belongs to the CutC family. As to quaternary structure, homodimer.

It localises to the cytoplasm. The protein is PF03932 family protein CutC of Salmonella typhi.